Consider the following 611-residue polypeptide: Cilia- and flagella-associated protein 100 (611 aa).

Over residues 1–17 the composition is skewed to polar residues; sequence MSEIPSTIVSKNMTNDK. Positions 1–57 are disordered; sequence MSEIPSTIVSKNMTNDKNSLESMNISSSSSTEENPKKQARKNEEHGPDPSANPFHLS. The segment covering 20–32 has biased composition (low complexity); sequence LESMNISSSSSTE. The segment covering 33 to 47 has biased composition (basic and acidic residues); sequence ENPKKQARKNEEHGP. 3 coiled-coil regions span residues 101 to 128, 164 to 203, and 230 to 257; these read SLRR…RAFR, ALDV…FDEF, and LEIR…KHYK. Disordered stretches follow at residues 287-323 and 338-380; these read EVSE…GQGT and SPSY…GEEP. Residues 338–357 are compositionally biased toward low complexity; it reads SPSYLSSPQQGSQPSESSGG. Coiled coils occupy residues 393-432 and 526-578; these read VFRE…MDRE and QVKI…RGRT.

The protein belongs to the CFAP100 family.

It is found in the cytoplasm. The protein localises to the cytoskeleton. The protein resides in the cilium axoneme. Functionally, may play a role in ciliary/flagellar motility by regulating the assembly and the activity of axonemal inner dynein arm. In Homo sapiens (Human), this protein is Cilia- and flagella-associated protein 100.